Consider the following 282-residue polypeptide: Snake venom serine protease NaSP (282 aa).

Residues 1–18 (MVLIRVLASLLILQLSYS) form the signal peptide. A propeptide spanning residues 19–56 (KSLDDGAKESAYDDEIQQSSWGNSTVNTTLTETVVIQL) is cleaved from the precursor. 2 N-linked (GlcNAc...) asparagine glycosylation sites follow: Asn41 and Asn45. Residues 57–280 (IMGGSECYKS…YIDWIRGIIA (224 aa)) form the Peptidase S1 domain. 5 cysteine pairs are disulfide-bonded: Cys63-Cys195, Cys82-Cys98, Cys174-Cys241, Cys206-Cys220, and Cys231-Cys256. The active-site Charge relay system is His97. An N-linked (GlcNAc...) asparagine glycan is attached at Asn135. Asp142 serves as the catalytic Charge relay system. N-linked (GlcNAc...) asparagine glycans are attached at residues Asn149 and Asn153. Ser235 functions as the Charge relay system in the catalytic mechanism.

Belongs to the peptidase S1 family. Snake venom subfamily. Monomer. In terms of tissue distribution, expressed by the venom gland.

Its subcellular location is the secreted. Snake venom serine protease that may act in the hemostasis system of the prey. This chain is Snake venom serine protease NaSP, found in Naja atra (Chinese cobra).